The following is a 566-amino-acid chain: Proline--tRNA ligase (566 aa).

It belongs to the class-II aminoacyl-tRNA synthetase family. ProS type 1 subfamily. Homodimer.

Its subcellular location is the cytoplasm. It catalyses the reaction tRNA(Pro) + L-proline + ATP = L-prolyl-tRNA(Pro) + AMP + diphosphate. Functionally, catalyzes the attachment of proline to tRNA(Pro) in a two-step reaction: proline is first activated by ATP to form Pro-AMP and then transferred to the acceptor end of tRNA(Pro). As ProRS can inadvertently accommodate and process non-cognate amino acids such as alanine and cysteine, to avoid such errors it has two additional distinct editing activities against alanine. One activity is designated as 'pretransfer' editing and involves the tRNA(Pro)-independent hydrolysis of activated Ala-AMP. The other activity is designated 'posttransfer' editing and involves deacylation of mischarged Ala-tRNA(Pro). The misacylated Cys-tRNA(Pro) is not edited by ProRS. This Campylobacter concisus (strain 13826) protein is Proline--tRNA ligase.